Consider the following 220-residue polypeptide: Protein-L-isoaspartate O-methyltransferase (220 aa).

Ser-70 is an active-site residue.

It belongs to the methyltransferase superfamily. L-isoaspartyl/D-aspartyl protein methyltransferase family.

The protein localises to the cytoplasm. The catalysed reaction is [protein]-L-isoaspartate + S-adenosyl-L-methionine = [protein]-L-isoaspartate alpha-methyl ester + S-adenosyl-L-homocysteine. Catalyzes the methyl esterification of L-isoaspartyl residues in peptides and proteins that result from spontaneous decomposition of normal L-aspartyl and L-asparaginyl residues. It plays a role in the repair and/or degradation of damaged proteins. This Halorhodospira halophila (strain DSM 244 / SL1) (Ectothiorhodospira halophila (strain DSM 244 / SL1)) protein is Protein-L-isoaspartate O-methyltransferase.